Here is a 739-residue protein sequence, read N- to C-terminus: Poly(A) polymerase gamma (739 aa).

Position 2 is an N6-acetyllysine (lysine 2). Serine 23 bears the Phosphoserine mark. Residues 99–101, threonine 108, 112–114, aspartate 166, lysine 227, tyrosine 236, and 245–246 contribute to the ATP site; these read FGS, DID, and GV. Mg(2+)-binding residues include aspartate 112, aspartate 114, and aspartate 166. A disordered region spans residues 506-566; that stretch reads KSLSDVSRSS…PTGEIERSSA (61 aa). 2 stretches are compositionally biased toward polar residues: residues 509–531 and 538–556; these read SDVS…TCLD and SGTP…NPDS. Phosphoserine is present on serine 524. A phosphoserine mark is found at serine 602 and serine 651. Residue threonine 657 is modified to Phosphothreonine. Over residues 677–688 the composition is skewed to basic and acidic residues; sequence SRAAEDRKRKPM. The disordered stretch occupies residues 677–725; the sequence is SRAAEDRKRKPMDSIGGESMPIPTIDTARKKRLPSKELPDSSSPVPANN. Serine 711 is modified (phosphoserine).

This sequence belongs to the poly(A) polymerase family. Mg(2+) serves as cofactor. Requires Mn(2+) as cofactor.

It is found in the nucleus. It catalyses the reaction RNA(n) + ATP = RNA(n)-3'-adenine ribonucleotide + diphosphate. In terms of biological role, responsible for the post-transcriptional adenylation of the 3'-terminal of mRNA precursors and several small RNAs including signal recognition particle (SRP) RNA, nuclear 7SK RNA, U2 small nuclear RNA, and ribosomal 5S RNA. This Mus musculus (Mouse) protein is Poly(A) polymerase gamma (Papolg).